A 263-amino-acid chain; its full sequence is uncharacterized protein (263 aa).

The region spanning 6-121 (TAIIADDEPL…RLQTTCERVK (116 aa)) is the Response regulatory domain. D58 is modified (4-aspartylphosphate). An HTH LytTR-type domain is found at 158–263 (IKATQGDDIH…RASQSLFKGM (106 aa)).

This is an uncharacterized protein from Vibrio parahaemolyticus serotype O3:K6 (strain RIMD 2210633).